The primary structure comprises 187 residues: Dihydrofolate reductase (187 aa).

Residues Pro4–Lys185 form the DHFR domain. NADP(+) is bound by residues Ala10 and Gly16–Asp22. Glu31–Gln36 lines the substrate pocket. Lys33 carries the N6-acetyllysine; alternate modification. At Lys33 the chain carries N6-succinyllysine; alternate. An NADP(+)-binding site is contributed by Arg55 to Thr57. Substrate is bound at residue Arg71. NADP(+) contacts are provided by residues Ser77–Glu79 and Gly117–Glu124.

This sequence belongs to the dihydrofolate reductase family. As to quaternary structure, homodimer.

It is found in the mitochondrion. Its subcellular location is the cytoplasm. The catalysed reaction is (6S)-5,6,7,8-tetrahydrofolate + NADP(+) = 7,8-dihydrofolate + NADPH + H(+). Its pathway is cofactor biosynthesis; tetrahydrofolate biosynthesis; 5,6,7,8-tetrahydrofolate from 7,8-dihydrofolate: step 1/1. Functionally, key enzyme in folate metabolism. Contributes to the de novo mitochondrial thymidylate biosynthesis pathway. Catalyzes an essential reaction for de novo glycine and purine synthesis, and for DNA precursor synthesis. Binds its own mRNA. The chain is Dihydrofolate reductase (Dhfr) from Rattus norvegicus (Rat).